Reading from the N-terminus, the 308-residue chain is MYYGLDIGGTKIELAIFDTQLALQDKWRLSTPGQDYSAFMATLAEQIEKADQQCGERGTVGIALPGVVKADGTVISSNVPCLNQRRVAHDLAQLLNRTVAIGNDCRCFALSEAVLGVGRGYSRVLGMILGTGTGGGLCIDGKLYLGANRLAGEFGHQGVSANVACRHQLPLYVCGCGLEGCAETYVSGTGLGRLYQDIAGQTADTFAWLNALRCNDPLAIKTFDTYMDILGSLMASLVLAMDPDIIVLGGGLSEVEEILAALPQATKAHLFDGVTLPQFKLADFGSASGVRGAALLGHGLDAGISYEA.

Residues 4-11 (GLDIGGTK) and 132-139 (GTGGGLCI) each bind ATP. Residues H156, C174, C176, and C181 each coordinate Zn(2+).

Belongs to the ROK (NagC/XylR) family.

The protein localises to the cytoplasm. It catalyses the reaction N-acetyl-D-galactosamine + ATP = N-acetyl-D-galactosamine 6-phosphate + ADP + H(+). The enzyme catalyses N-acetyl-D-glucosamine + ATP = N-acetyl-D-glucosamine 6-phosphate + ADP + H(+). Functionally, involved in the pathway of N-acetyl-D-galactosamine degradation. Catalyzes the phosphorylation of N-acetyl-D-galactosamine (GalNAc) to yield D-galactosamine 6-phosphate (GalN-6-P). It can also phosphorylate N-acetylglucosamine (GlcNAc). The polypeptide is N-acetylgalactosamine kinase AgaK (Shewanella sp. (strain ANA-3)).